The primary structure comprises 283 residues: Bifunctional protein FolD (283 aa).

Residues 165-167 and serine 190 contribute to the NADP(+) site; that span reads GRS.

The protein belongs to the tetrahydrofolate dehydrogenase/cyclohydrolase family. Homodimer.

It catalyses the reaction (6R)-5,10-methylene-5,6,7,8-tetrahydrofolate + NADP(+) = (6R)-5,10-methenyltetrahydrofolate + NADPH. It carries out the reaction (6R)-5,10-methenyltetrahydrofolate + H2O = (6R)-10-formyltetrahydrofolate + H(+). The protein operates within one-carbon metabolism; tetrahydrofolate interconversion. Catalyzes the oxidation of 5,10-methylenetetrahydrofolate to 5,10-methenyltetrahydrofolate and then the hydrolysis of 5,10-methenyltetrahydrofolate to 10-formyltetrahydrofolate. In Variovorax paradoxus (strain S110), this protein is Bifunctional protein FolD.